We begin with the raw amino-acid sequence, 85 residues long: Large ribosomal subunit protein eL43 (85 aa).

The C4-type zinc-finger motif lies at 38 to 59; it reads CPVCGRKAVRRISTGIWQCQKC.

Belongs to the eukaryotic ribosomal protein eL43 family. Zn(2+) serves as cofactor.

The polypeptide is Large ribosomal subunit protein eL43 (Thermococcus sibiricus (strain DSM 12597 / MM 739)).